Here is a 139-residue protein sequence, read N- to C-terminus: MKKGTVLNSDISSVISRLGHTDTLVVCDAGLPIPKSATRIDMALTQGVPSFMQVLGVVTNEMQVEAVIIAEEIKQHNPQLHETLLTHLEQLQQHQGNTIEIRYTTHEQFKQQTAESQAVIRSGECSPYANIILCAGVTF.

The Proton donor role is filled by H20. Substrate-binding positions include D28, H106, and 128–130 (YAN).

It belongs to the RbsD / FucU family. RbsD subfamily. Homodecamer.

The protein resides in the cytoplasm. It carries out the reaction beta-D-ribopyranose = beta-D-ribofuranose. Its pathway is carbohydrate metabolism; D-ribose degradation; D-ribose 5-phosphate from beta-D-ribopyranose: step 1/2. Catalyzes the interconversion of beta-pyran and beta-furan forms of D-ribose. This is D-ribose pyranase from Escherichia coli O81 (strain ED1a).